A 478-amino-acid polypeptide reads, in one-letter code: Divinyl ether synthase CYP74D3 (478 aa).

Heme is bound at residue Cys432.

The protein belongs to the cytochrome P450 family. 9-divinyl ether synthase subfamily. Not detected in leaves, stems or roots of healthy plants.

The protein localises to the cytoplasm. The protein resides in the cytosol. The enzyme catalyses (9S)-hydroperoxy-(10E,12Z)-octadecadienoate = colneleate + H2O. The catalysed reaction is (9S)-hydroperoxy-(10E,12Z,15Z)-octadecatrienoate = colnelenate + H2O. Its function is as follows. Strictly inducible cytochrome P450 involved in the biosynthesis of the anti-fungal toxins colneleate and colnelenate. Can use (9S)-hydroperoxy-(10E,12Z)-octadecadienoate (9-HPOD) and (9S)-hydroperoxy-(10E,12Z,15Z)-octadecatrienoate (9-HPOT) as substrates, but has a very low activity with the corresponding 13-hydroperoxides (13-HPOD and 13-POT). This chain is Divinyl ether synthase CYP74D3, found in Nicotiana tabacum (Common tobacco).